A 275-amino-acid chain; its full sequence is 3-methyl-2-oxobutanoate hydroxymethyltransferase (275 aa).

Positions 49 and 88 each coordinate Mg(2+). 3-methyl-2-oxobutanoate-binding positions include 49 to 50, Asp-88, and Lys-118; that span reads DS. Glu-120 provides a ligand contact to Mg(2+). The active-site Proton acceptor is the Glu-187.

The protein belongs to the PanB family. As to quaternary structure, homodecamer; pentamer of dimers. The cofactor is Mg(2+).

It is found in the cytoplasm. The enzyme catalyses 3-methyl-2-oxobutanoate + (6R)-5,10-methylene-5,6,7,8-tetrahydrofolate + H2O = 2-dehydropantoate + (6S)-5,6,7,8-tetrahydrofolate. It functions in the pathway cofactor biosynthesis; (R)-pantothenate biosynthesis; (R)-pantoate from 3-methyl-2-oxobutanoate: step 1/2. Its function is as follows. Catalyzes the reversible reaction in which hydroxymethyl group from 5,10-methylenetetrahydrofolate is transferred onto alpha-ketoisovalerate to form ketopantoate. This chain is 3-methyl-2-oxobutanoate hydroxymethyltransferase, found in Nitrobacter hamburgensis (strain DSM 10229 / NCIMB 13809 / X14).